Reading from the N-terminus, the 260-residue chain is Imidazole glycerol phosphate synthase subunit HisF (260 aa).

Catalysis depends on residues D11 and D130.

It belongs to the HisA/HisF family. In terms of assembly, heterodimer of HisH and HisF.

The protein resides in the cytoplasm. The enzyme catalyses 5-[(5-phospho-1-deoxy-D-ribulos-1-ylimino)methylamino]-1-(5-phospho-beta-D-ribosyl)imidazole-4-carboxamide + L-glutamine = D-erythro-1-(imidazol-4-yl)glycerol 3-phosphate + 5-amino-1-(5-phospho-beta-D-ribosyl)imidazole-4-carboxamide + L-glutamate + H(+). It functions in the pathway amino-acid biosynthesis; L-histidine biosynthesis; L-histidine from 5-phospho-alpha-D-ribose 1-diphosphate: step 5/9. IGPS catalyzes the conversion of PRFAR and glutamine to IGP, AICAR and glutamate. The HisF subunit catalyzes the cyclization activity that produces IGP and AICAR from PRFAR using the ammonia provided by the HisH subunit. This Thermomicrobium roseum (strain ATCC 27502 / DSM 5159 / P-2) protein is Imidazole glycerol phosphate synthase subunit HisF.